A 109-amino-acid chain; its full sequence is U16-hexatoxin-Hi1a (109 aa).

The first 16 residues, 1–16 (LTGHLCCMMIWWQATQ), serve as a signal peptide directing secretion. Positions 17-43 (VISPPLPVIREENNSHKMGVSLFPLKR) are excised as a propeptide.

In terms of processing, contains 2 disulfide bonds. Expressed by the venom gland.

The protein localises to the secreted. In terms of biological role, probable ion channel inhibitor. The chain is U16-hexatoxin-Hi1a from Hadronyche infensa (Fraser island funnel-web spider).